The sequence spans 295 residues: Nucleotide-binding protein LSL_1171 (295 aa).

13-20 (GMSGAGKT) is an ATP binding site. 63 to 66 (DLRS) is a binding site for GTP.

This sequence belongs to the RapZ-like family.

In terms of biological role, displays ATPase and GTPase activities. The polypeptide is Nucleotide-binding protein LSL_1171 (Ligilactobacillus salivarius (strain UCC118) (Lactobacillus salivarius)).